Here is a 327-residue protein sequence, read N- to C-terminus: Delta(3,5)-Delta(2,4)-dienoyl-CoA isomerase, mitochondrial (327 aa).

The N-terminal 33 residues, 1–33, are a transit peptide targeting the mitochondrion; sequence MATAMTVSSKLLGLLMQQLRGTRQLYFNVSLRS. Residues 115-119 and Gly173 each bind substrate; that span reads SGIDL. At Lys230 the chain carries N6-succinyllysine. Ser267 carries the phosphoserine modification. Lys316 bears the N6-succinyllysine mark. Positions 325 to 327 match the Microbody targeting signal motif; sequence SKL. Lys326 carries the post-translational modification N6-acetyllysine.

This sequence belongs to the enoyl-CoA hydratase/isomerase family. In terms of assembly, homohexamer. Expressed in heart and liver (at protein level).

It localises to the mitochondrion. The protein localises to the peroxisome. It catalyses the reaction (3E,5Z)-octadienoyl-CoA = (2E,4E)-octadienoyl-CoA. It carries out the reaction (3E,5Z,8Z,11Z,14Z)-eicosapentaenoyl-CoA = (2E,4E,8Z,11Z,14Z)-eicosapentaenoyl-CoA. It functions in the pathway lipid metabolism; fatty acid beta-oxidation. Functionally, isomerization of 3-trans,5-cis-dienoyl-CoA to 2-trans,4-trans-dienoyl-CoA. The sequence is that of Delta(3,5)-Delta(2,4)-dienoyl-CoA isomerase, mitochondrial from Rattus norvegicus (Rat).